Consider the following 557-residue polypeptide: TWiK family of potassium channels protein 7 (557 aa).

2 disordered regions span residues 1–34 (MTSS…EALL) and 128–151 (DKSG…EEEE). At 1–165 (MTSSSRGYQR…RKFAKLVLPH (165 aa)) the chain is on the cytoplasmic side. Residues 134–151 (DIDDESDDESKDEDEEEE) show a composition bias toward acidic residues. The helical transmembrane segment at 166 to 186 (VALVLLTCTYTVIGALIFYSV) threads the bilayer. Asparagine 220 and asparagine 237 each carry an N-linked (GlcNAc...) asparagine glycan. The pore-forming intramembrane region spans 270–290 (SIFFAVTVVTTIGYGNPVPVT). A helical membrane pass occupies residues 295–315 (IWCILFSLLGIPLTLVTIADL). The Cytoplasmic segment spans residues 316–368 (GKFLSEHLVWLYGNYLKLKYLILSRHRKERREHVCEHCHSHGMGHDMNIEEKR). A helical transmembrane segment spans residues 369-389 (IPAFLVLAILIVYTAFGGVLM). Positions 397–417 (FFTSFYWSFITMTTVGFGDLM) form an intramembrane region, pore-forming. The chain crosses the membrane as a helical span at residues 426–446 (IILLYIILGLAITTMCIDLVG). The Cytoplasmic segment spans residues 447 to 557 (VQYIRKIHYF…SRYSLNRAFK (111 aa)).

It belongs to the two pore domain potassium channel (TC 1.A.1.8) family.

The protein resides in the membrane. The sequence is that of TWiK family of potassium channels protein 7 (twk-7) from Caenorhabditis elegans.